The primary structure comprises 363 residues: Chorismate synthase (363 aa).

2 residues coordinate NADP(+): Arg-48 and Arg-54. FMN-binding positions include 125 to 127 (RSS), 237 to 238 (NA), Gly-277, 292 to 296 (KPTSS), and Arg-318.

This sequence belongs to the chorismate synthase family. Homotetramer. Requires FMNH2 as cofactor.

It carries out the reaction 5-O-(1-carboxyvinyl)-3-phosphoshikimate = chorismate + phosphate. Its pathway is metabolic intermediate biosynthesis; chorismate biosynthesis; chorismate from D-erythrose 4-phosphate and phosphoenolpyruvate: step 7/7. Functionally, catalyzes the anti-1,4-elimination of the C-3 phosphate and the C-6 proR hydrogen from 5-enolpyruvylshikimate-3-phosphate (EPSP) to yield chorismate, which is the branch point compound that serves as the starting substrate for the three terminal pathways of aromatic amino acid biosynthesis. This reaction introduces a second double bond into the aromatic ring system. The chain is Chorismate synthase from Ectopseudomonas mendocina (strain ymp) (Pseudomonas mendocina).